The sequence spans 302 residues: Probable 2-(5''-triphosphoribosyl)-3'-dephosphocoenzyme-A synthase 1 (302 aa).

This sequence belongs to the CitG/MdcB family.

It carries out the reaction 3'-dephospho-CoA + ATP = 2'-(5''-triphospho-alpha-D-ribosyl)-3'-dephospho-CoA + adenine. This is Probable 2-(5''-triphosphoribosyl)-3'-dephosphocoenzyme-A synthase 1 from Salmonella typhimurium (strain LT2 / SGSC1412 / ATCC 700720).